A 429-amino-acid chain; its full sequence is MKTSILILAAGLGTRMKSQKPKVLQELCQKSMILHILKKAFALSDDVSVVLSHQKERVEKEILEYFPKTQILEQDLQNYPGTAGALRGFEPKNERVLILCGDMPLVEQTSLEALLSNNAKLNLAVFKARDPKSYGRVVIKNDSVEKIVEFKDANTQEKEINTCNAGVYVIDSRLLKELLPLIDNNNAAKEYYLTDIVKLAKEKDVMIKAVFVDEDEFMGINDKFELSIAENFMQEKIKKYWMQQGVIFHLPQSTFIGADVEFVGECEVYENVRIEGKSKIINSIIKSSSVIENSIVENSDVGPLAHLRPNCELKNTHIGNFVECKNAKLNTVKAGHLSYLGDCEIDSGTNIGCGTITCNYDGVKKYKTIIGKNVFVGSDTQFIAPVKIEDEVIIAAGSTVSVNVEKGALFINRAGHKMIKDYYYKKFQK.

A pyrophosphorylase region spans residues 1 to 223 (MKTSILILAA…EDEFMGINDK (223 aa)). Residues 8 to 11 (LAAG), Lys22, and 81 to 82 (GT) each bind UDP-N-acetyl-alpha-D-glucosamine. Asp102 is a Mg(2+) binding site. Residues Gly135, Glu149, Asn164, and Asn221 each contribute to the UDP-N-acetyl-alpha-D-glucosamine site. Asn221 contacts Mg(2+). Residues 224–244 (FELSIAENFMQEKIKKYWMQQ) are linker. Residues 245–429 (GVIFHLPQST…KDYYYKKFQK (185 aa)) form an N-acetyltransferase region. Residues Arg308 and Lys325 each coordinate UDP-N-acetyl-alpha-D-glucosamine. Residue His336 is the Proton acceptor of the active site. Residues Tyr339 and Asn350 each coordinate UDP-N-acetyl-alpha-D-glucosamine. Acetyl-CoA is bound by residues 359 to 360 (NY), Ser378, Ala396, and Arg413.

The protein in the N-terminal section; belongs to the N-acetylglucosamine-1-phosphate uridyltransferase family. In the C-terminal section; belongs to the transferase hexapeptide repeat family. As to quaternary structure, homotrimer. Requires Mg(2+) as cofactor.

It is found in the cytoplasm. It carries out the reaction alpha-D-glucosamine 1-phosphate + acetyl-CoA = N-acetyl-alpha-D-glucosamine 1-phosphate + CoA + H(+). The catalysed reaction is N-acetyl-alpha-D-glucosamine 1-phosphate + UTP + H(+) = UDP-N-acetyl-alpha-D-glucosamine + diphosphate. It participates in nucleotide-sugar biosynthesis; UDP-N-acetyl-alpha-D-glucosamine biosynthesis; N-acetyl-alpha-D-glucosamine 1-phosphate from alpha-D-glucosamine 6-phosphate (route II): step 2/2. The protein operates within nucleotide-sugar biosynthesis; UDP-N-acetyl-alpha-D-glucosamine biosynthesis; UDP-N-acetyl-alpha-D-glucosamine from N-acetyl-alpha-D-glucosamine 1-phosphate: step 1/1. Its pathway is bacterial outer membrane biogenesis; LPS lipid A biosynthesis. Catalyzes the last two sequential reactions in the de novo biosynthetic pathway for UDP-N-acetylglucosamine (UDP-GlcNAc). The C-terminal domain catalyzes the transfer of acetyl group from acetyl coenzyme A to glucosamine-1-phosphate (GlcN-1-P) to produce N-acetylglucosamine-1-phosphate (GlcNAc-1-P), which is converted into UDP-GlcNAc by the transfer of uridine 5-monophosphate (from uridine 5-triphosphate), a reaction catalyzed by the N-terminal domain. This chain is Bifunctional protein GlmU, found in Campylobacter jejuni (strain RM1221).